A 131-amino-acid chain; its full sequence is Cystatin J (131 aa).

The signal sequence occupies residues 1–18; sequence MHLYLCVLVCLSIGMANC. The region spanning 35-109 is the Cystatin domain; the sequence is DEILLTGVEF…RMNLPTKCSF (75 aa). The short motif at 68-72 is the Secondary area of contact element; it reads QVVAG. Disulfide bonds link cysteine 86-cysteine 97 and cysteine 107-cysteine 128.

It belongs to the cystatin family.

It is found in the secreted. It localises to the nematocyst. Functionally, this recombinant protein inhibits the C1 cysteine protease papain (Ki is below 0.5 nM). This chain is Cystatin J, found in Cyanea capillata (Lion's mane jellyfish).